The primary structure comprises 148 residues: D-aminoacyl-tRNA deacylase (148 aa).

The Gly-cisPro motif, important for rejection of L-amino acids motif lies at 137–138 (GP).

This sequence belongs to the DTD family. Homodimer.

It is found in the cytoplasm. The enzyme catalyses glycyl-tRNA(Ala) + H2O = tRNA(Ala) + glycine + H(+). It catalyses the reaction a D-aminoacyl-tRNA + H2O = a tRNA + a D-alpha-amino acid + H(+). Its function is as follows. An aminoacyl-tRNA editing enzyme that deacylates mischarged D-aminoacyl-tRNAs. Also deacylates mischarged glycyl-tRNA(Ala), protecting cells against glycine mischarging by AlaRS. Acts via tRNA-based rather than protein-based catalysis; rejects L-amino acids rather than detecting D-amino acids in the active site. By recycling D-aminoacyl-tRNA to D-amino acids and free tRNA molecules, this enzyme counteracts the toxicity associated with the formation of D-aminoacyl-tRNA entities in vivo and helps enforce protein L-homochirality. This is D-aminoacyl-tRNA deacylase from Deinococcus geothermalis (strain DSM 11300 / CIP 105573 / AG-3a).